An 85-amino-acid chain; its full sequence is N.vectensis toxin 1 5 (85 aa).

Residues 1–20 (MASFKIVIVCLALLVAVACA) form the signal peptide. Residues 21-36 (RRRDMMSDDELDFHLS) constitute a propeptide that is removed on maturation. Cystine bridges form between Cys42/Cys82, Cys44/Cys72, and Cys65/Cys83.

It belongs to the sea anemone sodium channel inhibitory toxin family. Type II subfamily. Expressed in ectodermal glands and in clumps outside of the extodermal layer. Is not expressed in nematocytes. In adult female tissues, shows similar expression levels in mesenteries (gametes-producing tissue), tentacles, pharynx and physa.

The protein localises to the secreted. Binds to site 3 of voltage-gated sodium channels and inhibits the inactivation process. Is highly active on DmNav1/TipE (drosophila) and is only extremely weakly active on rat Nav1.4-beta-1/SCN4A-SCN1B, and on human Nav1.5-beta-1/SCN5A-beta-1. This reveals high specificity for arthropod over mammalian channels. In vivo, when released into the medium, this recombinant toxin induces impaired swimming, paralysis and death of the crustacean A.nauplii within several hours. Also causes paralysis of cherry shrimps immediately after injection at very low doses. Its effect on zebrafish (D.rerio) larvae is also rapid, since it induces tail twitching accompanied by impaired swimming after 20 minutes and complete paralysis within 45 minutes. It has also been observed to cause death of zebrafish larvae within 1 hour. This is N.vectensis toxin 1 5 from Nematostella vectensis (Starlet sea anemone).